Here is a 679-residue protein sequence, read N- to C-terminus: ATP-dependent zinc metalloprotease FtsH (679 aa).

Residues 1-6 are Cytoplasmic-facing; that stretch reads MNRIFR. The helical transmembrane segment at 7–27 threads the bilayer; that stretch reads NTIFYLLIFLVIVGIVSVFNS. Residues 28–114 are Extracellular-facing; it reads DQTETENVSF…IEPADETSGW (87 aa). Residues 115-135 form a helical membrane-spanning segment; it reads VQFFTGIIPFIIIFILFFFLL. Residues 136 to 679 lie on the Cytoplasmic side of the membrane; that stretch reads SQAQGGGSRV…SFEDDTNKKE (544 aa). ATP is bound at residue 206–213; the sequence is GPPGTGKT. Residue His-428 participates in Zn(2+) binding. Glu-429 is a catalytic residue. Zn(2+) contacts are provided by His-432 and Asp-504. 2 stretches are compositionally biased toward basic and acidic residues: residues 621-642 and 658-679; these read LEKE…KEET and PIEK…NKKE. Residues 621–679 form a disordered region; that stretch reads LEKEKASESDVKVNINSKKEETPQVEAEQPQEPNTDEPIEKDPSVEDNRSFEDDTNKKE.

In the central section; belongs to the AAA ATPase family. This sequence in the C-terminal section; belongs to the peptidase M41 family. Homohexamer. Zn(2+) serves as cofactor.

It localises to the cell membrane. In terms of biological role, acts as a processive, ATP-dependent zinc metallopeptidase for both cytoplasmic and membrane proteins. Plays a role in the quality control of integral membrane proteins. In Alkalihalophilus pseudofirmus (strain ATCC BAA-2126 / JCM 17055 / OF4) (Bacillus pseudofirmus), this protein is ATP-dependent zinc metalloprotease FtsH.